Reading from the N-terminus, the 400-residue chain is Tryptophan synthase beta chain (400 aa).

The residue at position 92 (K92) is an N6-(pyridoxal phosphate)lysine.

The protein belongs to the TrpB family. In terms of assembly, tetramer of two alpha and two beta chains. Pyridoxal 5'-phosphate is required as a cofactor.

The catalysed reaction is (1S,2R)-1-C-(indol-3-yl)glycerol 3-phosphate + L-serine = D-glyceraldehyde 3-phosphate + L-tryptophan + H2O. It functions in the pathway amino-acid biosynthesis; L-tryptophan biosynthesis; L-tryptophan from chorismate: step 5/5. In terms of biological role, the beta subunit is responsible for the synthesis of L-tryptophan from indole and L-serine. The protein is Tryptophan synthase beta chain of Neisseria gonorrhoeae.